We begin with the raw amino-acid sequence, 347 residues long: Farnesyl pyrophosphate synthase ERG20 (347 aa).

Isopentenyl diphosphate contacts are provided by lysine 50, arginine 53, and glutamine 88. Mg(2+) contacts are provided by aspartate 95 and aspartate 99. Arginine 104 lines the dimethylallyl diphosphate pocket. Arginine 105 provides a ligand contact to isopentenyl diphosphate. Positions 192, 193, 232, 249, and 258 each coordinate dimethylallyl diphosphate.

The protein belongs to the FPP/GGPP synthase family. Mg(2+) is required as a cofactor.

The enzyme catalyses isopentenyl diphosphate + dimethylallyl diphosphate = (2E)-geranyl diphosphate + diphosphate. The catalysed reaction is isopentenyl diphosphate + (2E)-geranyl diphosphate = (2E,6E)-farnesyl diphosphate + diphosphate. Its pathway is isoprenoid biosynthesis; farnesyl diphosphate biosynthesis; farnesyl diphosphate from geranyl diphosphate and isopentenyl diphosphate: step 1/1. The protein operates within isoprenoid biosynthesis; geranyl diphosphate biosynthesis; geranyl diphosphate from dimethylallyl diphosphate and isopentenyl diphosphate: step 1/1. In terms of biological role, farnesyl pyrophosphate synthase; part of the second module of ergosterol biosynthesis pathway that includes the middle steps of the pathway. ERG20 catalyzes the sequential condensation of isopentenyl pyrophosphate with dimethylallyl pyrophosphate, and then with the resultant geranylpyrophosphate to the ultimate product farnesyl pyrophosphate. The second module is carried out in the vacuole and involves the formation of farnesyl diphosphate, which is also an important intermediate in the biosynthesis of ubiquinone, dolichol, heme and prenylated proteins. Activity by the mevalonate kinase ERG12 (FG05912) first converts mevalonate into 5-phosphomevalonate. 5-phosphomevalonate is then further converted to 5-diphosphomevalonate by the phosphomevalonate kinase ERG8 (FG09764). The diphosphomevalonate decarboxylase ERG19 (FG10424) then produces isopentenyl diphosphate. The isopentenyl-diphosphate delta-isomerase IDI1 (FG09722) then catalyzes the 1,3-allylic rearrangement of the homoallylic substrate isopentenyl (IPP) to its highly electrophilic allylic isomer, dimethylallyl diphosphate (DMAPP). Finally the farnesyl diphosphate synthase ERG20 (FG06784) catalyzes the sequential condensation of isopentenyl pyrophosphate with dimethylallyl pyrophosphate, and then with the resultant geranylpyrophosphate to the ultimate product farnesyl pyrophosphate. In Gibberella zeae (strain ATCC MYA-4620 / CBS 123657 / FGSC 9075 / NRRL 31084 / PH-1) (Wheat head blight fungus), this protein is Farnesyl pyrophosphate synthase ERG20.